The following is a 906-amino-acid chain: Protein translocase subunit SecA (906 aa).

Residues Gln87, 105-109 (GEGKT), and Asp512 each bind ATP. The disordered stretch occupies residues 839-896 (LEEQQRQQSEAAPRTYTHATAESQLADEEAAGEEGHTTFVRDEQKIGRNDPCPCGSGK). Residues 871–886 (EEGHTTFVRDEQKIGR) are compositionally biased toward basic and acidic residues. Positions 890, 892, 901, and 902 each coordinate Zn(2+).

Belongs to the SecA family. In terms of assembly, monomer and homodimer. Part of the essential Sec protein translocation apparatus which comprises SecA, SecYEG and auxiliary proteins SecDF-YajC and YidC. Requires Zn(2+) as cofactor.

The protein resides in the cell inner membrane. It is found in the cytoplasm. It catalyses the reaction ATP + H2O + cellular proteinSide 1 = ADP + phosphate + cellular proteinSide 2.. Part of the Sec protein translocase complex. Interacts with the SecYEG preprotein conducting channel. Has a central role in coupling the hydrolysis of ATP to the transfer of proteins into and across the cell membrane, serving both as a receptor for the preprotein-SecB complex and as an ATP-driven molecular motor driving the stepwise translocation of polypeptide chains across the membrane. This chain is Protein translocase subunit SecA, found in Aeromonas salmonicida (strain A449).